Reading from the N-terminus, the 123-residue chain is uncharacterized protein (123 aa).

A signal peptide spans 1–24 (MLPLCLTFLSFFLSLGGSFKAVMT). Helical transmembrane passes span 39–59 (FWIF…ALAI) and 101–121 (FGGI…ALTG).

It localises to the membrane. This is an uncharacterized protein from Saccharomyces cerevisiae (strain ATCC 204508 / S288c) (Baker's yeast).